We begin with the raw amino-acid sequence, 158 residues long: Fucolectin (158 aa).

The segment at 16–148 is F5/8 type C-like; sequence KATQSAQLRG…TSESLHLCEV (133 aa). The Ca(2+) site is built by Asn-35, Asp-38, Asn-40, and Ser-49. 3 disulfides stabilise this stretch: Cys-50–Cys-146, Cys-82–Cys-83, and Cys-108–Cys-124. 2 residues coordinate alpha-L-fucose: His-52 and Arg-79. The Cell attachment site signature appears at 79–81; sequence RGD. An alpha-L-fucose-binding site is contributed by Arg-86. Residues Cys-146 and Glu-147 each contribute to the Ca(2+) site.

The protein belongs to the fucolectin family. Homotrimer.

It localises to the secreted. Functionally, acts as a defensive agent. Recognizes blood group fucosylated oligosaccharides including A, B, H and Lewis B-type antigens. Does not recognize Lewis A antigen and has low affinity for monovalent haptens. In Anguilla anguilla (European freshwater eel), this protein is Fucolectin.